The following is a 240-amino-acid chain: 1-(5-phosphoribosyl)-5-[(5-phosphoribosylamino)methylideneamino] imidazole-4-carboxamide isomerase (240 aa).

Asp-8 serves as the catalytic Proton acceptor. Asp-130 functions as the Proton donor in the catalytic mechanism.

Belongs to the HisA/HisF family.

The protein resides in the cytoplasm. It catalyses the reaction 1-(5-phospho-beta-D-ribosyl)-5-[(5-phospho-beta-D-ribosylamino)methylideneamino]imidazole-4-carboxamide = 5-[(5-phospho-1-deoxy-D-ribulos-1-ylimino)methylamino]-1-(5-phospho-beta-D-ribosyl)imidazole-4-carboxamide. Its pathway is amino-acid biosynthesis; L-histidine biosynthesis; L-histidine from 5-phospho-alpha-D-ribose 1-diphosphate: step 4/9. The polypeptide is 1-(5-phosphoribosyl)-5-[(5-phosphoribosylamino)methylideneamino] imidazole-4-carboxamide isomerase (Flavobacterium johnsoniae (strain ATCC 17061 / DSM 2064 / JCM 8514 / BCRC 14874 / CCUG 350202 / NBRC 14942 / NCIMB 11054 / UW101) (Cytophaga johnsonae)).